Reading from the N-terminus, the 592-residue chain is Bifunctional purine biosynthesis protein ATIC (592 aa).

Residue Met-1 is modified to N-acetylmethionine. The MGS-like domain maps to Met-1–Cys-146. The interval Met-1–Ser-198 is IMP cyclohydrolase. IMP-binding positions include Ser-12 to Lys-14, Ser-34 to Thr-37, Arg-64 to Thr-67, Cys-101 to Asn-102, and Asp-125 to Ile-126. Lys-137 acts as the Proton donor/acceptor; for FAICAR cyclization activity in catalysis. Position 199 is an N6-acetyllysine (Lys-199). The AICAR formyltransferase stretch occupies residues Lys-199–His-592. 5-amino-1-(5-phospho-beta-D-ribosyl)imidazole-4-carboxamide is bound by residues Arg-207–Tyr-208, His-267, Gly-316, Asp-339, Asn-431, and Arg-451. The Proton acceptor; for AICAR formyltransferase activity role is filled by His-267. A (6R)-10-formyltetrahydrofolate-binding site is contributed by Ile-452. Residue Phe-541 coordinates 5-amino-1-(5-phospho-beta-D-ribosyl)imidazole-4-carboxamide. Residues Asp-546 and Ser-565 to Thr-566 each bind (6R)-10-formyltetrahydrofolate. Position 588 (Arg-588) interacts with 5-amino-1-(5-phospho-beta-D-ribosyl)imidazole-4-carboxamide.

Belongs to the PurH family. Homodimer. Associates with internalized INSR complexes on Golgi/endosomal membranes. Interacts with INSR; ATIC together with PRKAA2/AMPK2 and HACD3/PTPLAD1 is proposed to be part of a signaling network regulating INSR autophosphorylation and endocytosis.

It localises to the cytoplasm. The protein localises to the cytosol. It carries out the reaction (6R)-10-formyltetrahydrofolate + 5-amino-1-(5-phospho-beta-D-ribosyl)imidazole-4-carboxamide = 5-formamido-1-(5-phospho-D-ribosyl)imidazole-4-carboxamide + (6S)-5,6,7,8-tetrahydrofolate. The catalysed reaction is 10-formyldihydrofolate + 5-amino-1-(5-phospho-beta-D-ribosyl)imidazole-4-carboxamide = 5-formamido-1-(5-phospho-D-ribosyl)imidazole-4-carboxamide + 7,8-dihydrofolate. It catalyses the reaction IMP + H2O = 5-formamido-1-(5-phospho-D-ribosyl)imidazole-4-carboxamide. The protein operates within purine metabolism; IMP biosynthesis via de novo pathway; 5-formamido-1-(5-phospho-D-ribosyl)imidazole-4-carboxamide from 5-amino-1-(5-phospho-D-ribosyl)imidazole-4-carboxamide (10-formyl THF route): step 1/1. It participates in purine metabolism; IMP biosynthesis via de novo pathway; IMP from 5-formamido-1-(5-phospho-D-ribosyl)imidazole-4-carboxamide: step 1/1. With respect to regulation, AMP and XMP inhibit AICAR formyltransferase activity. AICAR formyltransferase activity is inhibited by N-(6-fluoro-1-oxo-1,2-dihydroisoquinolin-7-yl)-5- [(3R)-3-hydroxypyrrolidin-1-yl]thiophene-2-sulfonamide (LSN 3213128), which acts as a tumor suppression in cancer cell lines. Its function is as follows. Bifunctional enzyme that catalyzes the last two steps of purine biosynthesis. Acts as a transformylase that incorporates a formyl group to the AMP analog AICAR (5-amino-1-(5-phospho-beta-D-ribosyl)imidazole-4-carboxamide) to produce the intermediate formyl-AICAR (FAICAR). Also displays cyclohydrolase activity involving the cyclization of FAICAR to inosine monophosphate (IMP). Can use both 10-formyldihydrofolate and 10-formyltetrahydrofolate as the formyl donor in this reaction. Also catalyzes the cyclization of FAICAR to IMP. Promotes insulin receptor/INSR autophosphorylation and is involved in INSR internalization. This is Bifunctional purine biosynthesis protein ATIC (Atic) from Mus musculus (Mouse).